Here is a 178-residue protein sequence, read N- to C-terminus: uncharacterized protein (178 aa).

It belongs to the IIV-6 136R family.

This is an uncharacterized protein from Invertebrate iridescent virus 6 (IIV-6).